A 147-amino-acid chain; its full sequence is SPI-1 type 3 secretion system pilotin (147 aa).

An N-terminal signal peptide occupies residues 1 to 15 (MKKFYSCLPVFLLIG). Residue C16 is the site of N-palmitoyl cysteine attachment. C16 carries the S-diacylglycerol cysteine lipid modification.

It belongs to the InvH family.

The protein localises to the cell outer membrane. Functionally, involved in the synthesis of the type III secretion system (T3SS), also called injectisome, which is used to inject bacterial effector proteins into eukaryotic host cells. Pilot protein that is required for the proper localization of the secretin InvG/SctC in the outer membrane. Necessary for efficient adherence and entry of these organisms into cultured epithelial cells. This Salmonella typhimurium (strain SL1344) protein is SPI-1 type 3 secretion system pilotin.